We begin with the raw amino-acid sequence, 225 residues long: Testis-expressed protein 30 (225 aa).

This chain is Testis-expressed protein 30 (Tex30), found in Mus musculus (Mouse).